Consider the following 442-residue polypeptide: Protein translocase subunit SecY (442 aa).

10 helical membrane-spanning segments follow: residues 29–49, 69–89, 126–146, 153–173, 182–202, 217–237, 274–294, 320–340, 377–397, and 400–420; these read LITI…VPDI, IFTG…LPYI, YIAF…LLRP, PLFI…VMWI, IGNG…PQTL, ITAV…IVFV, VMPI…AGFA, VYTV…ASLI, LTFL…FVEQ, and GVTT…GVAI.

The protein belongs to the SecY/SEC61-alpha family. As to quaternary structure, component of the Sec protein translocase complex. Heterotrimer consisting of SecY, SecE and SecG subunits. The heterotrimers can form oligomers, although 1 heterotrimer is thought to be able to translocate proteins. Interacts with the ribosome. Interacts with SecDF, and other proteins may be involved. Interacts with SecA.

It is found in the cell inner membrane. Its subcellular location is the cellular thylakoid membrane. In terms of biological role, the central subunit of the protein translocation channel SecYEG. Consists of two halves formed by TMs 1-5 and 6-10. These two domains form a lateral gate at the front which open onto the bilayer between TMs 2 and 7, and are clamped together by SecE at the back. The channel is closed by both a pore ring composed of hydrophobic SecY resides and a short helix (helix 2A) on the extracellular side of the membrane which forms a plug. The plug probably moves laterally to allow the channel to open. The ring and the pore may move independently. This chain is Protein translocase subunit SecY, found in Synechocystis sp. (strain ATCC 27184 / PCC 6803 / Kazusa).